Reading from the N-terminus, the 627-residue chain is MRRPKKYESGEATQYISRRAALRKLQLSLNDFRRLCILKGVYPREPKHRRRAQKGSSEIRVLYHTKDIRFLLHEQIVWTLRDYKIFAKKSNRDRAIKDFRNLKRRLALFPEIKLDHIVKERYPTFIDALKDLDDCLTLLFLFSTFPSLHLIPREQSNLCRRLTVEFLHYVIASKSLRKVFISIKGYYFQAEIKGQKVTWIVPHYYPFKPQSRQEVDFKVMSIFVEFYTIMLGFTNFRLFHGLNLAYPPQFPTNMLQDNEDTFKDESSFVSDRIAALNFELLRTDKVQEDEEELDIDMELLEQDGDSKRIIKMKQEAQEVARLRTLFKGLKFFINREVPREPLVIIIRSFGGKVSWDSSIFPGSTFDESDETITHQIVDRPSLATQYISRDYIQPQWLFDCVNQRQLLPTNKYFIGEKLPPHLSPFVDSKRDTYIPPEEKALHDPSLIETHEQSDDDSDEEAAQEEEEAVDQELLDAQLQLAYQQETAEYKKYGGPDGVNEDEEDPEEDEEDEDEEEEEELDEQAKRLKEEKQKMSVQSGKVHKVNKRQLHKAEVDEHRLQARMVKPRHRNLFRKLIREKQTKEKEEWLLRKKRRTFEAGEKEARKTAKRAARKEAAAAAAKASKLGK.

One can recognise a BRCT domain in the interval 321 to 414 (RLRTLFKGLK…QLLPTNKYFI (94 aa)). 3 disordered regions span residues 436–471 (PEEKALHDPSLIETHEQSDDDSDEEAAQEEEEAVDQ), 489–562 (YKKY…LQAR), and 596–627 (FEAGEKEARKTAKRAARKEAAAAAAKASKLGK). Phosphoserine occurs at positions 453 and 457. Composition is skewed to acidic residues over residues 453-471 (SDDDSDEEAAQEEEEAVDQ) and 498-521 (VNEDEEDPEEDEEDEDEEEEEELD). The span at 522–533 (EQAKRLKEEKQK) shows a compositional bias: basic and acidic residues. A compositionally biased stretch (basic residues) spans 540–549 (KVHKVNKRQL). Composition is skewed to basic and acidic residues over residues 550 to 559 (HKAEVDEHRL) and 596 to 605 (FEAGEKEARK). Positions 616 to 627 (AAAAAKASKLGK) are enriched in low complexity.

The protein belongs to the pescadillo family.

Its subcellular location is the nucleus. It localises to the nucleolus. The protein localises to the nucleoplasm. Its function is as follows. Required for maturation of ribosomal RNAs and formation of the large ribosomal subunit. In Drosophila ananassae (Fruit fly), this protein is Pescadillo homolog.